A 520-amino-acid polypeptide reads, in one-letter code: Cytochrome P450 monooxygenase 176 (520 aa).

Asparagine 6 is a glycosylation site (N-linked (GlcNAc...) asparagine). Residues 10 to 27 (LLVVAGALFLTFLTTRFI) traverse the membrane as a helical segment. N-linked (GlcNAc...) asparagine glycosylation is found at asparagine 141 and asparagine 270. Cysteine 445 contacts heme. The N-linked (GlcNAc...) asparagine glycan is linked to asparagine 517.

The protein belongs to the cytochrome P450 family. It depends on heme as a cofactor.

It is found in the membrane. Its pathway is secondary metabolite biosynthesis. In terms of biological role, cytochrome P450 monooxygenase that is able to use delta(6)-protoilludene as a substrate to produce delta(6)-protoilludene-5-ol and an unidentified hydroxyprotoilludene. Is also able to use phenanthrene as a substrate for oxidation. The chain is Cytochrome P450 monooxygenase 176 from Postia placenta (strain ATCC 44394 / Madison 698-R) (Brown rot fungus).